A 308-amino-acid chain; its full sequence is Cytochrome b (308 aa).

4 consecutive transmembrane segments (helical) span residues 1 to 21, 45 to 66, 81 to 101, and 146 to 166; these read FGSL…LLAM, WLIR…YLHI, WNIG…GYVL, and FFAL…IHLT. Residues H51 and H65 each coordinate heme b. Residues H150 and H164 each contribute to the heme b site. A ubiquinone is bound at residue H169. The next 3 membrane-spanning stretches (helical) occupy residues 194 to 214, 256 to 276, and 288 to 308; these read TKDA…AMFS, LGGV…PLLH, and LSQF…WIGS.

It belongs to the cytochrome b family. The cytochrome bc1 complex contains 11 subunits: 3 respiratory subunits (MT-CYB, CYC1 and UQCRFS1), 2 core proteins (UQCRC1 and UQCRC2) and 6 low-molecular weight proteins (UQCRH/QCR6, UQCRB/QCR7, UQCRQ/QCR8, UQCR10/QCR9, UQCR11/QCR10 and a cleavage product of UQCRFS1). This cytochrome bc1 complex then forms a dimer. Heme b serves as cofactor.

It is found in the mitochondrion inner membrane. Functionally, component of the ubiquinol-cytochrome c reductase complex (complex III or cytochrome b-c1 complex) that is part of the mitochondrial respiratory chain. The b-c1 complex mediates electron transfer from ubiquinol to cytochrome c. Contributes to the generation of a proton gradient across the mitochondrial membrane that is then used for ATP synthesis. This Zaratornis stresemanni (White-cheeked cotinga) protein is Cytochrome b (MT-CYB).